The chain runs to 512 residues: Choline-sulfatase (512 aa).

Ca(2+)-binding residues include Asp-14, Gln-15, and Cys-54. Residue Cys-54 is the Nucleophile of the active site. Position 54 is a 3-oxoalanine (Cys) (Cys-54). Residue His-104 is part of the active site. Ca(2+)-binding residues include Asp-296 and His-297.

This sequence belongs to the sulfatase family. Ca(2+) is required as a cofactor. The conversion to 3-oxoalanine (also known as C-formylglycine, FGly), of a serine or cysteine residue in prokaryotes and of a cysteine residue in eukaryotes, is critical for catalytic activity.

The catalysed reaction is choline sulfate + H2O = choline + sulfate + H(+). The protein operates within amine and polyamine biosynthesis; choline biosynthesis; choline from choline sulfate: step 1/1. In terms of biological role, converts choline-O-sulfate into choline. This Rhizobium meliloti (strain 1021) (Ensifer meliloti) protein is Choline-sulfatase (betC).